An 882-amino-acid polypeptide reads, in one-letter code: Valine--tRNA ligase (882 aa).

The 'HIGH' region signature appears at 45–55 (PNVTGSLHIGH). The 'KMSKS' region motif lies at 525–529 (KFSKS). Lys-528 serves as a coordination point for ATP. Positions 812-881 (EGLIDVAKEK…VLKKGIQNLA (70 aa)) form a coiled coil.

It belongs to the class-I aminoacyl-tRNA synthetase family. ValS type 1 subfamily. In terms of assembly, monomer.

It localises to the cytoplasm. It catalyses the reaction tRNA(Val) + L-valine + ATP = L-valyl-tRNA(Val) + AMP + diphosphate. Functionally, catalyzes the attachment of valine to tRNA(Val). As ValRS can inadvertently accommodate and process structurally similar amino acids such as threonine, to avoid such errors, it has a 'posttransfer' editing activity that hydrolyzes mischarged Thr-tRNA(Val) in a tRNA-dependent manner. This Leptospira interrogans serogroup Icterohaemorrhagiae serovar Lai (strain 56601) protein is Valine--tRNA ligase.